A 394-amino-acid polypeptide reads, in one-letter code: 1-deoxy-D-xylulose 5-phosphate reductoisomerase (394 aa).

8 residues coordinate NADPH: threonine 10, glycine 11, serine 12, isoleucine 13, glycine 38, arginine 39, asparagine 40, and asparagine 123. Residue lysine 124 coordinates 1-deoxy-D-xylulose 5-phosphate. Glutamate 125 is an NADPH binding site. Residue aspartate 149 participates in Mn(2+) binding. 1-deoxy-D-xylulose 5-phosphate-binding residues include serine 150, glutamate 151, serine 175, and histidine 198. Glutamate 151 lines the Mn(2+) pocket. Residue glycine 204 coordinates NADPH. Residues serine 211, asparagine 216, lysine 217, and glutamate 220 each coordinate 1-deoxy-D-xylulose 5-phosphate. A Mn(2+)-binding site is contributed by glutamate 220.

This sequence belongs to the DXR family. It depends on Mg(2+) as a cofactor. Mn(2+) is required as a cofactor.

It catalyses the reaction 2-C-methyl-D-erythritol 4-phosphate + NADP(+) = 1-deoxy-D-xylulose 5-phosphate + NADPH + H(+). It participates in isoprenoid biosynthesis; isopentenyl diphosphate biosynthesis via DXP pathway; isopentenyl diphosphate from 1-deoxy-D-xylulose 5-phosphate: step 1/6. Catalyzes the NADPH-dependent rearrangement and reduction of 1-deoxy-D-xylulose-5-phosphate (DXP) to 2-C-methyl-D-erythritol 4-phosphate (MEP). The chain is 1-deoxy-D-xylulose 5-phosphate reductoisomerase from Cereibacter sphaeroides (strain ATCC 17025 / ATH 2.4.3) (Rhodobacter sphaeroides).